The primary structure comprises 141 residues: Nucleoside triphosphatase NudI (141 aa).

Residues 1 to 141 (MRQRTIVCPL…RKTLSLKGLL (141 aa)) form the Nudix hydrolase domain. The short motif at 38 to 59 (GGVEPGERIEDALRREIREELG) is the Nudix box element.

The protein belongs to the Nudix hydrolase family. NudI subfamily. In terms of assembly, monomer. Mg(2+) serves as cofactor.

It catalyses the reaction a ribonucleoside 5'-triphosphate + H2O = a ribonucleoside 5'-phosphate + diphosphate + H(+). It carries out the reaction a 2'-deoxyribonucleoside 5'-triphosphate + H2O = a 2'-deoxyribonucleoside 5'-phosphate + diphosphate + H(+). The enzyme catalyses dUTP + H2O = dUMP + diphosphate + H(+). The catalysed reaction is dTTP + H2O = dTMP + diphosphate + H(+). It catalyses the reaction dCTP + H2O = dCMP + diphosphate + H(+). Catalyzes the hydrolysis of nucleoside triphosphates, with a preference for pyrimidine deoxynucleoside triphosphates (dUTP, dTTP and dCTP). The protein is Nucleoside triphosphatase NudI of Escherichia fergusonii (strain ATCC 35469 / DSM 13698 / CCUG 18766 / IAM 14443 / JCM 21226 / LMG 7866 / NBRC 102419 / NCTC 12128 / CDC 0568-73).